The sequence spans 159 residues: Ribosomal RNA large subunit methyltransferase H (159 aa).

S-adenosyl-L-methionine contacts are provided by Leu76 and Gly108.

It belongs to the RNA methyltransferase RlmH family. Homodimer.

The protein resides in the cytoplasm. The enzyme catalyses pseudouridine(1915) in 23S rRNA + S-adenosyl-L-methionine = N(3)-methylpseudouridine(1915) in 23S rRNA + S-adenosyl-L-homocysteine + H(+). Specifically methylates the pseudouridine at position 1915 (m3Psi1915) in 23S rRNA. The polypeptide is Ribosomal RNA large subunit methyltransferase H (Finegoldia magna (strain ATCC 29328 / DSM 20472 / WAL 2508) (Peptostreptococcus magnus)).